Consider the following 485-residue polypeptide: MNEELKDLTPKQTVAELDKYIIGQNKAKRAVAIALRNRMRRLKLPEEIRDEIAPKNILMIGPTGVGKTEIARRLAKLSGAPFLKVEATKYTEVGYVGRDVESMIRDLMAVGYTMVKSEMQEKLKEQAEKNTEESLLDLLLPGSNKKKTAATSAQPQDVSQASSGTTISLPSVSSTAQAEEHKAQNENDMSGTREKFRVMLRENKLEDKMVEVTISPSMGTPTFEFFAGGSNMEDIESAMSNISSMLMGGAKSKRKNVSVKEAREIIMAEQLDRMVDHDKVTDEAKQRVEQMGIIFIDEIDKVASRSDRGGGPDVSREGVQRDILPIVEGSKVSTKYGVVDTRHILFIAAGAFSVSKPSDLIPEFQGRFPLRVELEALHAEDFKRILLEPKNALTKQYAELLETEGVKIEFLDEAIDRMSFLAADVNSKNENIGARRLHTIMEMLLEDISFNASEMGGETVKIDVAYVDERLKDIVQDQDLSRYIL.

ATP-binding positions include isoleucine 22 and 64 to 69 (GVGKTE). The interval 146–189 (KKTAATSAQPQDVSQASSGTTISLPSVSSTAQAEEHKAQNENDM) is disordered. Residues 149 to 177 (AATSAQPQDVSQASSGTTISLPSVSSTAQ) are compositionally biased toward polar residues. Residues 178–189 (AEEHKAQNENDM) show a composition bias toward basic and acidic residues. 3 residues coordinate ATP: aspartate 297, glutamate 363, and arginine 435.

The protein belongs to the ClpX chaperone family. HslU subfamily. A double ring-shaped homohexamer of HslV is capped on each side by a ring-shaped HslU homohexamer. The assembly of the HslU/HslV complex is dependent on binding of ATP.

The protein resides in the cytoplasm. In terms of biological role, ATPase subunit of a proteasome-like degradation complex; this subunit has chaperone activity. The binding of ATP and its subsequent hydrolysis by HslU are essential for unfolding of protein substrates subsequently hydrolyzed by HslV. HslU recognizes the N-terminal part of its protein substrates and unfolds these before they are guided to HslV for hydrolysis. The polypeptide is ATP-dependent protease ATPase subunit HslU (Treponema denticola (strain ATCC 35405 / DSM 14222 / CIP 103919 / JCM 8153 / KCTC 15104)).